Reading from the N-terminus, the 309-residue chain is Homoserine kinase (309 aa).

91–101 provides a ligand contact to ATP; that stretch reads PIGSGLGSSAC.

This sequence belongs to the GHMP kinase family. Homoserine kinase subfamily.

It localises to the cytoplasm. The enzyme catalyses L-homoserine + ATP = O-phospho-L-homoserine + ADP + H(+). It functions in the pathway amino-acid biosynthesis; L-threonine biosynthesis; L-threonine from L-aspartate: step 4/5. In terms of biological role, catalyzes the ATP-dependent phosphorylation of L-homoserine to L-homoserine phosphate. The sequence is that of Homoserine kinase from Photorhabdus laumondii subsp. laumondii (strain DSM 15139 / CIP 105565 / TT01) (Photorhabdus luminescens subsp. laumondii).